The chain runs to 69 residues: MPLTVNCPICKAPVEWVPQSAFKPFCSERCKLIDLGDWASEKHVIPVKAEFDPEAFDEFDLDEGDFFKE.

Residues Cys7, Cys10, Cys26, and Cys30 each contribute to the Zn(2+) site.

The protein belongs to the DNA gyrase inhibitor YacG family. As to quaternary structure, interacts with GyrB. Zn(2+) serves as cofactor.

Functionally, inhibits all the catalytic activities of DNA gyrase by preventing its interaction with DNA. Acts by binding directly to the C-terminal domain of GyrB, which probably disrupts DNA binding by the gyrase. The chain is DNA gyrase inhibitor YacG from Shewanella baltica (strain OS195).